Reading from the N-terminus, the 287-residue chain is Polyamine aminopropyltransferase (287 aa).

In terms of domain architecture, PABS spans 5-238 (EIWYETLHAN…GIMTFAWASQ (234 aa)). Gln33 provides a ligand contact to S-methyl-5'-thioadenosine. 2 residues coordinate spermidine: His64 and Asp88. S-methyl-5'-thioadenosine contacts are provided by residues Glu108 and 140–141 (DG). The active-site Proton acceptor is the Asp158. 158–161 (DCTD) lines the spermidine pocket. Pro165 serves as a coordination point for S-methyl-5'-thioadenosine.

This sequence belongs to the spermidine/spermine synthase family. As to quaternary structure, homodimer or homotetramer.

It is found in the cytoplasm. It catalyses the reaction S-adenosyl 3-(methylsulfanyl)propylamine + putrescine = S-methyl-5'-thioadenosine + spermidine + H(+). It functions in the pathway amine and polyamine biosynthesis; spermidine biosynthesis; spermidine from putrescine: step 1/1. Its function is as follows. Catalyzes the irreversible transfer of a propylamine group from the amino donor S-adenosylmethioninamine (decarboxy-AdoMet) to putrescine (1,4-diaminobutane) to yield spermidine. The sequence is that of Polyamine aminopropyltransferase from Serratia proteamaculans (strain 568).